We begin with the raw amino-acid sequence, 233 residues long: Ribosome maturation factor RimP (233 aa).

Residues 167 to 179 (RGKAAEREKKRDL) are compositionally biased toward basic and acidic residues. The disordered stretch occupies residues 167–233 (RGKAAEREKK…RARRGEIDPD (67 aa)). The span at 187–196 (PHAKPAAQAK) shows a compositional bias: low complexity. Over residues 220-233 (LAADRARRGEIDPD) the composition is skewed to basic and acidic residues.

The protein belongs to the RimP family.

The protein localises to the cytoplasm. Required for maturation of 30S ribosomal subunits. This is Ribosome maturation factor RimP from Bradyrhizobium sp. (strain ORS 278).